Reading from the N-terminus, the 322-residue chain is RNA pseudouridine synthase 1 (322 aa).

Asp120 is a catalytic residue.

The protein belongs to the pseudouridine synthase RluA family.

The enzyme catalyses a uridine in RNA = a pseudouridine in RNA. This Arabidopsis thaliana (Mouse-ear cress) protein is RNA pseudouridine synthase 1.